The sequence spans 185 residues: Ribosome-recycling factor (185 aa).

Belongs to the RRF family.

It is found in the cytoplasm. Its function is as follows. Responsible for the release of ribosomes from messenger RNA at the termination of protein biosynthesis. May increase the efficiency of translation by recycling ribosomes from one round of translation to another. This chain is Ribosome-recycling factor, found in Bacillus anthracis (strain CDC 684 / NRRL 3495).